The sequence spans 494 residues: Alpha-amylase-related protein (494 aa).

The first 20 residues, 1-20, serve as a signal peptide directing secretion; that stretch reads MIKFALALTLCLAGASLSLA. Q21 is modified (pyrrolidone carboxylic acid). C48 and C104 are oxidised to a cystine. Ca(2+) contacts are provided by N118, Q169, and D178. C157 and C171 form a disulfide bridge. Residue R206 participates in chloride binding. D208 functions as the Nucleophile in the catalytic mechanism. H212 lines the Ca(2+) pocket. Catalysis depends on E245, which acts as the Proton donor. The chloride site is built by N308 and R343. 3 disulfide bridges follow: C376–C382, C418–C441, and C448–C460.

It belongs to the glycosyl hydrolase 13 family. Monomer. Ca(2+) is required as a cofactor. Chloride serves as cofactor.

It is found in the secreted. The catalysed reaction is Endohydrolysis of (1-&gt;4)-alpha-D-glucosidic linkages in polysaccharides containing three or more (1-&gt;4)-alpha-linked D-glucose units.. The sequence is that of Alpha-amylase-related protein (Amyrel) from Drosophila kikkawai (Fruit fly).